A 371-amino-acid chain; its full sequence is Protein disulfide isomerase-like 2-2 (371 aa).

A signal peptide spans 1-27; the sequence is MAIPRISPRKTLPLFAALALALAWAFA. Thioredoxin domains lie at 28 to 143 and 147 to 262; these read APAF…TEGG and KLAT…EKCG. Residues Cys-64, Cys-67, Cys-183, and Cys-186 each act as nucleophile in the active site. Intrachain disulfides connect Cys-64–Cys-67 and Cys-183–Cys-186.

It belongs to the protein disulfide isomerase family.

The protein localises to the secreted. The enzyme catalyses Catalyzes the rearrangement of -S-S- bonds in proteins.. Functionally, acts as a protein-folding catalyst that interacts with nascent polypeptides to catalyze the formation, isomerization, and reduction or oxidation of disulfide bonds. May play a role in storage protein biogenesis. The chain is Protein disulfide isomerase-like 2-2 (PDIL2-2) from Oryza sativa subsp. japonica (Rice).